Consider the following 405-residue polypeptide: BRCA1-A complex subunit Abraxas 1 (405 aa).

The 148-residue stretch at leucine 7–tyrosine 154 folds into the MPN domain. A Phosphoserine modification is found at serine 48. Residues serine 208–lysine 262 are a coiled coil. Residues alanine 333–phenylalanine 405 are disordered. A phosphoserine mark is found at serine 382, serine 383, serine 392, and serine 402. A compositionally biased stretch (acidic residues) spans isoleucine 386–threonine 397. A pSXXF motif motif is present at residues serine 402–phenylalanine 405.

It belongs to the FAM175 family. Abraxas subfamily. As to quaternary structure, component of the ARISC complex, at least composed of UIMC1/RAP80, ABRAXAS1, BRCC3/BRCC36, BABAM2 and BABAM1/NBA1. Component of the BRCA1-A complex, at least composed of the BRCA1, BARD1, UIMC1/RAP80, ABRAXAS1, BRCC3/BRCC36, BABAM2 and BABAM1/NBA1. In the complex, interacts directly with UIMC1/RAP80, BRCC3/BRCC36 and BABAM2. Homodimer. Interacts directly (when phosphorylated at Ser-402) with BRCA1. The phosphorylated homodimer can interact directly with two BRCA1 chains, giving rise to a heterotetramer. Binds polyubiquitin. Post-translationally, phosphorylation of Ser-402 of the pSXXF motif by ATM or ATR constitutes a specific recognition motif for the BRCT domain of BRCA1.

Its subcellular location is the nucleus. Involved in DNA damage response and double-strand break (DSB) repair. Component of the BRCA1-A complex, acting as a central scaffold protein that assembles the various components of the complex and mediates the recruitment of BRCA1. The BRCA1-A complex specifically recognizes 'Lys-63'-linked ubiquitinated histones H2A and H2AX at DNA lesion sites, leading to target the BRCA1-BARD1 heterodimer to sites of DNA damage at DSBs. This complex also possesses deubiquitinase activity that specifically removes 'Lys-63'-linked ubiquitin on histones H2A and H2AX. In Rattus norvegicus (Rat), this protein is BRCA1-A complex subunit Abraxas 1.